The chain runs to 310 residues: ADP-L-glycero-D-manno-heptose-6-epimerase (310 aa).

Residues phenylalanine 10–isoleucine 11, aspartate 31–asparagine 32, lysine 38, lysine 53, glutamate 75–serine 79, and asparagine 92 each bind NADP(+). Tyrosine 140 acts as the Proton acceptor in catalysis. Lysine 144 provides a ligand contact to NADP(+). Residue asparagine 169 coordinates substrate. NADP(+) is bound by residues valine 170 and lysine 178. Residue lysine 178 is the Proton acceptor of the active site. Residues serine 180, histidine 187, phenylalanine 201–serine 204, arginine 209, and tyrosine 272 contribute to the substrate site.

This sequence belongs to the NAD(P)-dependent epimerase/dehydratase family. HldD subfamily. As to quaternary structure, homopentamer. It depends on NADP(+) as a cofactor.

The catalysed reaction is ADP-D-glycero-beta-D-manno-heptose = ADP-L-glycero-beta-D-manno-heptose. It participates in nucleotide-sugar biosynthesis; ADP-L-glycero-beta-D-manno-heptose biosynthesis; ADP-L-glycero-beta-D-manno-heptose from D-glycero-beta-D-manno-heptose 7-phosphate: step 4/4. Its function is as follows. Catalyzes the interconversion between ADP-D-glycero-beta-D-manno-heptose and ADP-L-glycero-beta-D-manno-heptose via an epimerization at carbon 6 of the heptose. This chain is ADP-L-glycero-D-manno-heptose-6-epimerase, found in Cronobacter sakazakii (strain ATCC BAA-894) (Enterobacter sakazakii).